The following is a 97-amino-acid chain: YcgL domain-containing protein Avin_32960 (97 aa).

Positions 3-87 constitute a YcgL domain; the sequence is CICSIYKSPR…PEEEYVEHLP (85 aa).

The protein is YcgL domain-containing protein Avin_32960 of Azotobacter vinelandii (strain DJ / ATCC BAA-1303).